The chain runs to 143 residues: Nucleoside diphosphate kinase (143 aa).

6 residues coordinate ATP: Lys-11, Phe-59, Arg-87, Thr-93, Arg-104, and Asn-114. His-117 acts as the Pros-phosphohistidine intermediate in catalysis.

This sequence belongs to the NDK family. In terms of assembly, homotetramer. Mg(2+) serves as cofactor.

It is found in the cytoplasm. It catalyses the reaction dZDP + ATP = dZTP + ADP. It carries out the reaction a 2'-deoxyribonucleoside 5'-diphosphate + ATP = a 2'-deoxyribonucleoside 5'-triphosphate + ADP. The enzyme catalyses a ribonucleoside 5'-diphosphate + ATP = a ribonucleoside 5'-triphosphate + ADP. Its pathway is purine metabolism. Major role in the synthesis of nucleoside triphosphates other than ATP. The ATP gamma phosphate is transferred to the NDP beta phosphate via a ping-pong mechanism, using a phosphorylated active-site intermediate. Functionally, (Microbial infection) Catalyzes the phosphorylation of dZDP to dZTP, when the bacterium is infected by a phage that produces the substrate for the synthesis of dZTP (2- amino-2'-deoxyadenosine 5'-triphosphate), which is then used by the phage as a DNA polymerase substrate. The protein is Nucleoside diphosphate kinase of Salmonella paratyphi C (strain RKS4594).